Consider the following 414-residue polypeptide: METKNKKKVVLAYSGGLDTSVILKWLEETYGYEVIAACVNVGQTEDFAAIKKKALATGASKAYIVDVTEEFITDYIFPTLKAGAVYEDDYLLGTSFARPLISKKLVEIAEKEGAVAIAHGATGKGNDQVRFEATIKALNPNLKIIAPWRTWDLKSREDCIDYAVQHGIPIPVTKKDIYSRDENIWHISHEGGNLENPWNEHDDTIYKLSVSPEKSPDTPTYVELEFYKGIPVAVDGVKYEPIDMLTTLNKLGGAHGVGIIDIVENRLVGMKSRGVYETPGGTLLFAAHKALEKLTLDRDTTSFKKGISVKYAQLVYDGLWHTPLKDALDQFVNSTQEFVTGQVKLKLYKGNCTAVASASPFSLYNEDFVTFGEDHVYNQQDAEGFINLFALPLTIRALMLEEKLQGEAKEKKII.

12 to 20 (AYSGGLDTS) is an ATP binding site. Positions 90 and 95 each coordinate L-citrulline. G120 provides a ligand contact to ATP. Residues T122, N126, and D127 each coordinate L-aspartate. N126 serves as a coordination point for L-citrulline. Residues R130, S179, S188, E264, and Y276 each coordinate L-citrulline.

The protein belongs to the argininosuccinate synthase family. Type 1 subfamily. Homotetramer.

The protein localises to the cytoplasm. The enzyme catalyses L-citrulline + L-aspartate + ATP = 2-(N(omega)-L-arginino)succinate + AMP + diphosphate + H(+). The protein operates within amino-acid biosynthesis; L-arginine biosynthesis; L-arginine from L-ornithine and carbamoyl phosphate: step 2/3. This Alkaliphilus metalliredigens (strain QYMF) protein is Argininosuccinate synthase.